Consider the following 62-residue polypeptide: uncharacterized protein (62 aa).

This is an uncharacterized protein from Bacillus subtilis (strain 168).